We begin with the raw amino-acid sequence, 300 residues long: Diphthine methyl ester synthase (300 aa).

S-adenosyl-L-methionine is bound by residues Leu-9, Asp-85, Gly-88, 113 to 114 (SV), Leu-164, Leu-222, and His-247.

Belongs to the diphthine synthase family.

The protein resides in the cytoplasm. It carries out the reaction 2-[(3S)-amino-3-carboxypropyl]-L-histidyl-[translation elongation factor 2] + 4 S-adenosyl-L-methionine = diphthine methyl ester-[translation elongation factor 2] + 4 S-adenosyl-L-homocysteine + 3 H(+). Its pathway is protein modification; peptidyl-diphthamide biosynthesis. In terms of biological role, S-adenosyl-L-methionine-dependent methyltransferase that catalyzes four methylations of the modified target histidine residue in translation elongation factor 2 (EF-2), to form an intermediate called diphthine methyl ester. The four successive methylation reactions represent the second step of diphthamide biosynthesis. This Yarrowia lipolytica (strain CLIB 122 / E 150) (Yeast) protein is Diphthine methyl ester synthase (DPH5).